We begin with the raw amino-acid sequence, 116 residues long: uncharacterized protein (116 aa).

A helical transmembrane segment spans residues 22-42 (LIFLVVNLKVPAVGLELFLLV).

It localises to the membrane. This is an uncharacterized protein from Saccharomyces cerevisiae (strain ATCC 204508 / S288c) (Baker's yeast).